The following is a 196-amino-acid chain: Peroxynitrite isomerase (196 aa).

The tract at residues 1–29 is disordered; the sequence is MSDENPLQPPWLNAPPVDPYPYEESHDLR. A compositionally biased stretch (pro residues) spans 7–19; that stretch reads LQPPWLNAPPVDP. Positions 46–52 match the GXWXGXG motif; it reads GVWRGRG. H186 lines the heme b pocket.

The protein belongs to the nitrobindin family. Homodimer. Heme b is required as a cofactor.

It carries out the reaction peroxynitrite = nitrate. It functions in the pathway nitrogen metabolism. Its function is as follows. Heme-binding protein able to scavenge peroxynitrite and to protect free L-tyrosine against peroxynitrite-mediated nitration, by acting as a peroxynitrite isomerase that converts peroxynitrite to nitrate. Therefore, this protein likely plays a role in peroxynitrite sensing and in the detoxification of reactive nitrogen and oxygen species (RNS and ROS, respectively). Is able to bind nitric oxide (NO) in vitro, but may act as a sensor of peroxynitrite levels in vivo. In Salinispora arenicola (strain CNS-205), this protein is Peroxynitrite isomerase.